The following is a 284-amino-acid chain: Four and a half LIM domains protein 5 (284 aa).

A C4-type zinc finger spans residues 8–32 (CQYCMASLLGKKYVLKDDNPYCVSC). 4 consecutive LIM zinc-binding domains span residues 39-100 (NYCE…ECSS), 101-160 (KCFH…KEFA), 161-220 (HYCS…LYAK), and 223-283 (AACT…VDTD).

In terms of assembly, interacts with CREM (via the third LIM domain). Interacts (via second LIM domain) with SPAG8.

Its subcellular location is the nucleus. In terms of biological role, may be involved in the regulation of spermatogenesis. Stimulates CREM transcriptional activity in a phosphorylation-independent manner. This chain is Four and a half LIM domains protein 5 (FHL5), found in Bos taurus (Bovine).